Reading from the N-terminus, the 219-residue chain is Cysteine dioxygenase (219 aa).

Fe cation-binding residues include His-106, His-108, and His-166. The 3'-(S-cysteinyl)-tyrosine (Cys-Tyr) cross-link spans 113 to 183 (CVMKILHGSL…NDFAISLHLY (71 aa)).

It belongs to the cysteine dioxygenase family. It depends on Fe cation as a cofactor. The thioether cross-link between Cys-113 and Tyr-183 plays a structural role through stabilizing the Fe(2+) ion, and prevents the production of highly damaging free hydroxyl radicals by holding the oxygen radical via hydroxyl hydrogen.

The catalysed reaction is L-cysteine + O2 = 3-sulfino-L-alanine + H(+). In terms of biological role, cysteine dioxygenase involved in sulfite formation from cysteine. Required for keratin degradation and plays an important role in filamentous growth and virulence. This chain is Cysteine dioxygenase, found in Arthroderma benhamiae (Trichophyton mentagrophytes).